A 185-amino-acid polypeptide reads, in one-letter code: MTNAIIEKAKERFAHTHESLAREFGAIRAGRANASLLDRITVEYYGAPTPLNQLASITVPEARVLLISPFDKGSIADIERAINESDLGINPANDGSVIRLVIPALTEETRKELAKEVKKVGENAKIAIRNIRRDAMDEAKKQEKEKEITEDQLKTLEKDIQKATDDAVNKIDSMIAEKEKELLTV.

It belongs to the RRF family.

It is found in the cytoplasm. Responsible for the release of ribosomes from messenger RNA at the termination of protein biosynthesis. May increase the efficiency of translation by recycling ribosomes from one round of translation to another. In Streptococcus thermophilus (strain ATCC BAA-491 / LMD-9), this protein is Ribosome-recycling factor.